The primary structure comprises 237 residues: Ribosomal RNA small subunit methyltransferase G (237 aa).

Residues Gly78, Phe83, 129–130 (AE), and Arg148 contribute to the S-adenosyl-L-methionine site. The segment at 218–237 (KKETPNKYPRKAGMPNKRPL) is disordered.

This sequence belongs to the methyltransferase superfamily. RNA methyltransferase RsmG family.

It is found in the cytoplasm. In terms of biological role, specifically methylates the N7 position of a guanine in 16S rRNA. This is Ribosomal RNA small subunit methyltransferase G from Streptococcus sanguinis (strain SK36).